Consider the following 290-residue polypeptide: ATP synthase gamma chain (290 aa).

The protein belongs to the ATPase gamma chain family. As to quaternary structure, F-type ATPases have 2 components, CF(1) - the catalytic core - and CF(0) - the membrane proton channel. CF(1) has five subunits: alpha(3), beta(3), gamma(1), delta(1), epsilon(1). CF(0) has three main subunits: a, b and c.

The protein localises to the cell membrane. Produces ATP from ADP in the presence of a proton gradient across the membrane. The gamma chain is believed to be important in regulating ATPase activity and the flow of protons through the CF(0) complex. In Wolbachia pipientis subsp. Culex pipiens (strain wPip), this protein is ATP synthase gamma chain.